We begin with the raw amino-acid sequence, 355 residues long: Dual-specificity RNA methyltransferase RlmN (355 aa).

The active-site Proton acceptor is the glutamate 86. One can recognise a Radical SAM core domain in the interval 105-338 (KEARYTVCVS…CTIRESKGLD (234 aa)). A disulfide bond links cysteine 112 and cysteine 343. Residues cysteine 119, cysteine 123, and cysteine 126 each coordinate [4Fe-4S] cluster. Residues 169–170 (GE), serine 201, 224–226 (SLH), and asparagine 300 contribute to the S-adenosyl-L-methionine site. Residue cysteine 343 is the S-methylcysteine intermediate of the active site.

The protein belongs to the radical SAM superfamily. RlmN family. [4Fe-4S] cluster serves as cofactor.

It localises to the cytoplasm. It carries out the reaction adenosine(2503) in 23S rRNA + 2 reduced [2Fe-2S]-[ferredoxin] + 2 S-adenosyl-L-methionine = 2-methyladenosine(2503) in 23S rRNA + 5'-deoxyadenosine + L-methionine + 2 oxidized [2Fe-2S]-[ferredoxin] + S-adenosyl-L-homocysteine. The catalysed reaction is adenosine(37) in tRNA + 2 reduced [2Fe-2S]-[ferredoxin] + 2 S-adenosyl-L-methionine = 2-methyladenosine(37) in tRNA + 5'-deoxyadenosine + L-methionine + 2 oxidized [2Fe-2S]-[ferredoxin] + S-adenosyl-L-homocysteine. In terms of biological role, specifically methylates position 2 of adenine 2503 in 23S rRNA and position 2 of adenine 37 in tRNAs. m2A2503 modification seems to play a crucial role in the proofreading step occurring at the peptidyl transferase center and thus would serve to optimize ribosomal fidelity. This Nitratiruptor sp. (strain SB155-2) protein is Dual-specificity RNA methyltransferase RlmN.